A 437-amino-acid chain; its full sequence is Putative metabolite transport protein NicT (437 aa).

12 helical membrane passes run 28–48, 66–86, 93–113, 123–143, 152–172, 189–209, 254–274, 290–310, 320–340, 347–367, 374–394, and 411–431; these read LIPFLCFCYLAAYLDRINVGF, LGAGLFFVGYIIFEVPSNLIL, LWIARIMITWGLLSACTMFVT, FLLGAAEAGFLPGVLYYLTMW, IIALFMIGLPLSSVIGGPISG, WLFLLEAIPSVLLGILTFWAL, VWMLGGIDFSILLSAYAMGFW, IGLLTAIPSLAALAGMLMIGA, WHIIVPFIIGAIAMASSTLFS, VVLFAIASAAIIGAVPVFFSL, GTAAATGFALACSVANIAGLV, and AALWVFAGCLILSCFLVIALP.

It belongs to the major facilitator superfamily.

The protein resides in the membrane. In terms of biological role, probable transporter, possibly involved in the aerobic nicotinate degradation pathway. The polypeptide is Putative metabolite transport protein NicT (nicT) (Pseudomonas putida (strain ATCC 47054 / DSM 6125 / CFBP 8728 / NCIMB 11950 / KT2440)).